A 346-amino-acid polypeptide reads, in one-letter code: Endosome-associated-trafficking regulator 1 (346 aa).

The segment covering 46 to 67 (FVSSNSKRAFSKDSNQSTTQFR) has biased composition (polar residues). Disordered regions lie at residues 46 to 77 (FVSSNSKRAFSKDSNQSTTQFRGPSECPDGNL), 93 to 129 (LQEDEDDDWSGSYHPSVIENTHGPKVPSPAGTDGDES), and 153 to 173 (SPPAGLHGKTQHRPDSTSDSE). Residues 170–317 (SDSEEGLRLL…SGAQSSIKQL (148 aa)) adopt a coiled-coil conformation.

It belongs to the ENTR1 family.

It localises to the cytoplasm. The protein localises to the early endosome. The protein resides in the endosome. Its subcellular location is the recycling endosome. It is found in the midbody. It localises to the cytoskeleton. The protein localises to the microtubule organizing center. The protein resides in the centrosome. Its subcellular location is the cilium basal body. Its function is as follows. Endosome-associated protein that plays a role in membrane receptor sorting, cytokinesis and ciliogenesis. The chain is Endosome-associated-trafficking regulator 1 from Xenopus tropicalis (Western clawed frog).